The sequence spans 379 residues: MNPITYELIKTDKQTGARLGRVHTPHGSFDTPTFMPVGTLATVKTMSPEDLQSMQANIILSNTYHLWLRPGEDIIREAGGLHKFMNWDGAILTDSGGFQVFSLSDMREIKEEGVHFRNHLNGEKLFLSPEKAMDIQNALGSDIMMAFDECPPYPAEYDYMKASVERTSRWAERCLQAHNRPHDQGLFGIVQGGEYEALRKQSAEDLVSLDFPGYAIGGLSVGEPKHVMNKVLEFTTPFLPSNKPRYLMGVGSPDALIDGAIRGVDMFDCVLPTRIARNGTCMTSNGRLVVRNAKYARDFNPIDEHCSCHVCKNYSRAYIRHLIKCNETFGFRLTTYHNLHFLLKLMEQVRTAIKEDRLGDFKESFFEQYGLNKANPKNF.

Asp94 functions as the Proton acceptor in the catalytic mechanism. Substrate-binding positions include 94-98 (DSGGF), Asp148, Gln191, and Gly218. The segment at 249–255 (GVGSPDA) is RNA binding. Asp268 serves as the catalytic Nucleophile. The RNA binding; important for wobble base 34 recognition stretch occupies residues 273–277 (TRIAR). Zn(2+)-binding residues include Cys306, Cys308, Cys311, and His337.

The protein belongs to the queuine tRNA-ribosyltransferase family. Homodimer. Within each dimer, one monomer is responsible for RNA recognition and catalysis, while the other monomer binds to the replacement base PreQ1. It depends on Zn(2+) as a cofactor.

The enzyme catalyses 7-aminomethyl-7-carbaguanine + guanosine(34) in tRNA = 7-aminomethyl-7-carbaguanosine(34) in tRNA + guanine. The protein operates within tRNA modification; tRNA-queuosine biosynthesis. Functionally, catalyzes the base-exchange of a guanine (G) residue with the queuine precursor 7-aminomethyl-7-deazaguanine (PreQ1) at position 34 (anticodon wobble position) in tRNAs with GU(N) anticodons (tRNA-Asp, -Asn, -His and -Tyr). Catalysis occurs through a double-displacement mechanism. The nucleophile active site attacks the C1' of nucleotide 34 to detach the guanine base from the RNA, forming a covalent enzyme-RNA intermediate. The proton acceptor active site deprotonates the incoming PreQ1, allowing a nucleophilic attack on the C1' of the ribose to form the product. After dissociation, two additional enzymatic reactions on the tRNA convert PreQ1 to queuine (Q), resulting in the hypermodified nucleoside queuosine (7-(((4,5-cis-dihydroxy-2-cyclopenten-1-yl)amino)methyl)-7-deazaguanosine). In Oceanobacillus iheyensis (strain DSM 14371 / CIP 107618 / JCM 11309 / KCTC 3954 / HTE831), this protein is Queuine tRNA-ribosyltransferase.